We begin with the raw amino-acid sequence, 564 residues long: DNA ligase B (564 aa).

The active-site N6-AMP-lysine intermediate is the Lys-130.

It belongs to the NAD-dependent DNA ligase family. LigB subfamily.

The catalysed reaction is NAD(+) + (deoxyribonucleotide)n-3'-hydroxyl + 5'-phospho-(deoxyribonucleotide)m = (deoxyribonucleotide)n+m + AMP + beta-nicotinamide D-nucleotide.. Functionally, catalyzes the formation of phosphodiester linkages between 5'-phosphoryl and 3'-hydroxyl groups in double-stranded DNA using NAD as a coenzyme and as the energy source for the reaction. This chain is DNA ligase B, found in Klebsiella pneumoniae subsp. pneumoniae (strain ATCC 700721 / MGH 78578).